Reading from the N-terminus, the 177-residue chain is Plasmid transfer protein TraF (177 aa).

Positions 1-30 (MSRFQRLTKYVAIGGGAALLLAGAAYLAGA) are cleaved as a signal peptide.

This sequence belongs to the peptidase S26C family.

The protein resides in the periplasm. In terms of biological role, required for donor-specific phage sensitivity. May be involved in pilus assembly. The protein is Plasmid transfer protein TraF (traF) of Escherichia coli.